Reading from the N-terminus, the 357-residue chain is Popeye domain-containing protein 1 (357 aa).

Topologically, residues 1-38 are extracellular; that stretch reads MDTTAISPLTPLGVIPDLKNATSVPFNETACENWKEIH. Residues asparagine 20 and asparagine 27 are each glycosylated (N-linked (GlcNAc...) asparagine). A helical membrane pass occupies residues 39 to 59; the sequence is HLVFHVANICFAAGLVIPTTL. Residues 60–62 are Cytoplasmic-facing; sequence NLH. Residues 63–83 form a helical membrane-spanning segment; sequence MIFLRGLLTVGCALFIIWATL. Over 84–89 the chain is Extracellular; it reads YRCALD. The helical transmembrane segment at 90–110 threads the bilayer; the sequence is IMIWNSVFLVVNLLHFIYLVY. Topologically, residues 111–357 are cytoplasmic; the sequence is KRRPIKIEKE…AEKLELQRLP (247 aa). Residues 309 to 323 show a composition bias toward low complexity; the sequence is GTSSSSSLRPGRTSP. The disordered stretch occupies residues 309–357; it reads GTSSSSSLRPGRTSPYLRTSAKMKPIEESVEDDVFEAPSAEKLELQRLP. The segment covering 347–357 has biased composition (basic and acidic residues); the sequence is SAEKLELQRLP.

The protein belongs to the popeye family. Homodimer. Homodimerization requires the C-terminus cytoplasmic region. As to expression, expressed in the heart and skeletal muscle (at protein level). Isoform 1 and isoform 4: expressed in heart, muscle, brain, stomach, kidney, lung and spleen.

The protein localises to the lateral cell membrane. The protein resides in the cell junction. Its subcellular location is the tight junction. It is found in the membrane. It localises to the cell membrane. The protein localises to the sarcolemma. The protein resides in the caveola. In terms of biological role, cell adhesion molecule involved in the establishment and/or maintenance of cell integrity. Involved in the formation and regulation of the tight junction (TJ) paracellular permeability barrier in epithelial cells. Induces primordial adhesive contact and aggregation of epithelial cells in a Ca(2+)-independent manner. Involved in epithelial movement during corneal sheet formation and regeneration. May play a role in VAMP3-mediated vesicular transport and recycling of receptor molecules. May play a role in the regulation of cell shape and movement by modulating the Rho-GTPase activity. May be involved in skeletal muscle and heart development as well as in the maintenance of heart function. May also be involved in striated muscle regeneration and in the regulation of cell spreading. This Gallus gallus (Chicken) protein is Popeye domain-containing protein 1 (POPDC1).